The sequence spans 858 residues: Leucine--tRNA ligase (858 aa).

Positions 42-52 match the 'HIGH' region motif; sequence PYPSGRLHMGH. Residues 618–622 carry the 'KMSKS' region motif; sequence KMSKS. Lysine 621 contacts ATP.

Belongs to the class-I aminoacyl-tRNA synthetase family.

It localises to the cytoplasm. The enzyme catalyses tRNA(Leu) + L-leucine + ATP = L-leucyl-tRNA(Leu) + AMP + diphosphate. The protein is Leucine--tRNA ligase of Aliivibrio fischeri (strain MJ11) (Vibrio fischeri).